The following is a 555-amino-acid chain: MAEQTERKLLLSRWGQLRTERESWMSHWKEISDYLLPRAGRFFVQDRNRGEKRHNNILDNTGTRALRVLAAGMMAGMTSPARPWFRLTTSIPELDESAAVKAWLANVTRLMLMIFAKSNTYRALHSMYEELGAFGTASSIVLPDFDAVVYHHSLTAGEYAIAADNQGRVNTLYREFQITVAQMVREFGKDKCSTTVQSLFDRGALEQWVTVIHAIEPRADRDPSKRDDRNMAWKSVYFEPGADETRTLRESGYRSFRALCPRWALVGGDIYGNSPAMEALGDVRQLQHEQLRKAQAIDYKSNPPLQLPVSAKNQDISTVPGGLSYVDAAAPNGGIRTAFEVNLDLSHLLADIVDVRERIKASFYADLFLMLANGTNPQMTATEVAERHEEKLLMLGPVLERMHNEILDPLIELTFQRMVEANILPPPPQEMQGVDLNVEFVSMLAQAQRAIATNSVDRFVGNLGAVAGIKPEVLDKFDADRWADTYADMLGIDPELIVPGNQVALIRKQRADQQQAAQQAALLNQGADTAAKLGSVDTSKQNALTDVTRAFSGYT.

The protein belongs to the podoviridae head-to-tail connector protein family. Homododecamer.

The protein localises to the virion. Functionally, forms the portal vertex of the capsid. This portal plays critical roles in head assembly, genome packaging, neck/tail attachment, and genome ejection. The portal protein multimerizes as a single ring-shaped homododecamer arranged around a central channel. In Bordetella bronchiseptica (Alcaligenes bronchisepticus), this protein is Probable portal protein.